The following is a 203-amino-acid chain: Large ribosomal subunit protein uL13 (203 aa).

A2 carries the post-translational modification N-acetylalanine. Position 59 is a citrulline (R59). A Phosphoserine; by ZIPK/DAPK3 modification is found at S77. Residue R140 is modified to Citrulline. At K191 the chain carries N6-acetyllysine.

It belongs to the universal ribosomal protein uL13 family. Component of the 60S ribosome. Component of the GAIT complex. Interacts with EIF4G1. In terms of processing, phosphorylation at Ser-77 upon interferon-gamma treatment in monocytes involves a DAPK1-DAPK3 kinase cascade and is causing release from the ribosome, association with the GAIT complex and subsequent involvement in transcript-selective translation inhibition. Post-translationally, citrullinated by PADI4.

It localises to the cytoplasm. Its function is as follows. Associated with ribosomes but is not required for canonical ribosome function and has extra-ribosomal functions. Component of the GAIT (gamma interferon-activated inhibitor of translation) complex which mediates interferon-gamma-induced transcript-selective translation inhibition in inflammation processes. Upon interferon-gamma activation and subsequent phosphorylation dissociates from the ribosome and assembles into the GAIT complex which binds to stem loop-containing GAIT elements in the 3'-UTR of diverse inflammatory mRNAs (such as ceruplasmin) and suppresses their translation. In the GAIT complex interacts with m7G cap-bound eIF4G at or near the eIF3-binding site and blocks the recruitment of the 43S ribosomal complex. Involved in methylation of rRNA. The polypeptide is Large ribosomal subunit protein uL13 (RPL13A) (Homo sapiens (Human)).